We begin with the raw amino-acid sequence, 211 residues long: Mediator of RNA polymerase II transcription subunit 20 (211 aa).

It belongs to the Mediator complex subunit 20 family. In terms of assembly, component of the Mediator complex.

The protein localises to the nucleus. In terms of biological role, component of the Mediator complex, a coactivator involved in the regulated transcription of nearly all RNA polymerase II-dependent genes. Mediator functions as a bridge to convey information from gene-specific regulatory proteins to the basal RNA polymerase II transcription machinery. Mediator is recruited to promoters by direct interactions with regulatory proteins and serves as a scaffold for the assembly of a functional preinitiation complex with RNA polymerase II and the general transcription factors. The sequence is that of Mediator of RNA polymerase II transcription subunit 20 (SRB2) from Kluyveromyces lactis (strain ATCC 8585 / CBS 2359 / DSM 70799 / NBRC 1267 / NRRL Y-1140 / WM37) (Yeast).